We begin with the raw amino-acid sequence, 260 residues long: Tryptophan synthase alpha chain (260 aa).

Active-site proton acceptor residues include E52 and D63.

This sequence belongs to the TrpA family. Tetramer of two alpha and two beta chains.

It catalyses the reaction (1S,2R)-1-C-(indol-3-yl)glycerol 3-phosphate + L-serine = D-glyceraldehyde 3-phosphate + L-tryptophan + H2O. Its pathway is amino-acid biosynthesis; L-tryptophan biosynthesis; L-tryptophan from chorismate: step 5/5. Functionally, the alpha subunit is responsible for the aldol cleavage of indoleglycerol phosphate to indole and glyceraldehyde 3-phosphate. The chain is Tryptophan synthase alpha chain from Streptococcus mutans serotype c (strain ATCC 700610 / UA159).